The sequence spans 328 residues: 6-phosphogluconolactonase (328 aa).

It belongs to the cycloisomerase 2 family.

It catalyses the reaction 6-phospho-D-glucono-1,5-lactone + H2O = 6-phospho-D-gluconate + H(+). It functions in the pathway carbohydrate degradation; pentose phosphate pathway; D-ribulose 5-phosphate from D-glucose 6-phosphate (oxidative stage): step 2/3. Its function is as follows. Catalyzes the hydrolysis of 6-phosphogluconolactone to 6-phosphogluconate. This chain is 6-phosphogluconolactonase, found in Xenorhabdus nematophila (strain ATCC 19061 / DSM 3370 / CCUG 14189 / LMG 1036 / NCIMB 9965 / AN6).